Consider the following 336-residue polypeptide: Heat-inducible transcription repressor HrcA (336 aa).

Belongs to the HrcA family.

Its function is as follows. Negative regulator of class I heat shock genes (grpE-dnaK-dnaJ and groELS operons). Prevents heat-shock induction of these operons. The chain is Heat-inducible transcription repressor HrcA from Variovorax paradoxus (strain S110).